The chain runs to 125 residues: Small ribosomal subunit protein uS12 (125 aa).

The residue at position 89 (Asp89) is a 3-methylthioaspartic acid. Positions 106-125 (GVKDRKQSRSKYGAKRPKKA) are disordered. A compositionally biased stretch (basic residues) spans 113-125 (SRSKYGAKRPKKA).

This sequence belongs to the universal ribosomal protein uS12 family. As to quaternary structure, part of the 30S ribosomal subunit. Contacts proteins S8 and S17. May interact with IF1 in the 30S initiation complex.

With S4 and S5 plays an important role in translational accuracy. Its function is as follows. Interacts with and stabilizes bases of the 16S rRNA that are involved in tRNA selection in the A site and with the mRNA backbone. Located at the interface of the 30S and 50S subunits, it traverses the body of the 30S subunit contacting proteins on the other side and probably holding the rRNA structure together. The combined cluster of proteins S8, S12 and S17 appears to hold together the shoulder and platform of the 30S subunit. The sequence is that of Small ribosomal subunit protein uS12 from Variovorax paradoxus (strain S110).